We begin with the raw amino-acid sequence, 339 residues long: Glycerol-3-phosphate dehydrogenase [NAD(P)+] (339 aa).

Positions 13, 14, and 108 each coordinate NADPH. Sn-glycerol 3-phosphate-binding residues include Lys-108, Gly-139, and Ser-141. Ala-143 serves as a coordination point for NADPH. 5 residues coordinate sn-glycerol 3-phosphate: Lys-194, Asp-247, Ser-257, Arg-258, and Asn-259. The active-site Proton acceptor is the Lys-194. Residue Arg-258 coordinates NADPH. NADPH is bound by residues Val-282 and Glu-284.

It belongs to the NAD-dependent glycerol-3-phosphate dehydrogenase family.

The protein localises to the cytoplasm. It carries out the reaction sn-glycerol 3-phosphate + NAD(+) = dihydroxyacetone phosphate + NADH + H(+). The enzyme catalyses sn-glycerol 3-phosphate + NADP(+) = dihydroxyacetone phosphate + NADPH + H(+). It participates in membrane lipid metabolism; glycerophospholipid metabolism. In terms of biological role, catalyzes the reduction of the glycolytic intermediate dihydroxyacetone phosphate (DHAP) to sn-glycerol 3-phosphate (G3P), the key precursor for phospholipid synthesis. This chain is Glycerol-3-phosphate dehydrogenase [NAD(P)+], found in Streptococcus equi subsp. zooepidemicus (strain H70).